We begin with the raw amino-acid sequence, 86 residues long: Anti-adapter protein IraP (86 aa).

Residues 1–36 adopt a coiled-coil conformation; it reads MKNLIAELLFKLAQKEEESKELCAQVEALEIIVTAM.

Belongs to the IraP family. Interacts with RssB.

It localises to the cytoplasm. Functionally, inhibits RpoS proteolysis by regulating RssB activity, thereby increasing the stability of the sigma stress factor RpoS especially during phosphate starvation, but also in stationary phase and during nitrogen starvation. Its effect on RpoS stability is due to its interaction with RssB, which probably blocks the interaction of RssB with RpoS, and the consequent delivery of the RssB-RpoS complex to the ClpXP protein degradation pathway. The protein is Anti-adapter protein IraP of Escherichia coli O7:K1 (strain IAI39 / ExPEC).